Consider the following 146-residue polypeptide: Protein STIG1 (146 aa).

Positions 1–23 are cleaved as a signal peptide; the sequence is MAFINLLILIILTLSSTPITTMS. N-linked (GlcNAc...) asparagine glycosylation is found at N31, N61, and N84.

The protein belongs to the STIG1 family. Post-translationally, glycosylated. As to expression, expressed exclusively in the stigmatic secretory zone.

It is found in the secreted. Involved in the temporal regulation of the exudate secretion onto the stigma. In Nicotiana tabacum (Common tobacco), this protein is Protein STIG1.